The chain runs to 482 residues: Glutamate--tRNA ligase (482 aa).

The 'HIGH' region signature appears at 10–20 (PSPTGFLHIGN). The 'KMSKS' region motif lies at 253-257 (KLSKR). Lys-256 serves as a coordination point for ATP.

The protein belongs to the class-I aminoacyl-tRNA synthetase family. Glutamate--tRNA ligase type 1 subfamily. Monomer.

Its subcellular location is the cytoplasm. It carries out the reaction tRNA(Glu) + L-glutamate + ATP = L-glutamyl-tRNA(Glu) + AMP + diphosphate. Functionally, catalyzes the attachment of glutamate to tRNA(Glu) in a two-step reaction: glutamate is first activated by ATP to form Glu-AMP and then transferred to the acceptor end of tRNA(Glu). This Mesoplasma florum (strain ATCC 33453 / NBRC 100688 / NCTC 11704 / L1) (Acholeplasma florum) protein is Glutamate--tRNA ligase.